The chain runs to 848 residues: Translation initiation factor IF-2 (848 aa).

The segment covering 1-10 (MSENNNDKIT) has biased composition (basic and acidic residues). 2 disordered regions span residues 1 to 79 (MSEN…EKPV) and 121 to 163 (AERQ…LFSS). The segment covering 17 to 33 (LKRSGSETNTVKQNFNH) has biased composition (polar residues). Basic and acidic residues predominate over residues 121–138 (AERQAAEKQAKESEEGLH). Positions 149–163 (KSSSNTTKPTPLFSS) are enriched in polar residues. Residues 346-513 (TRPPIVTIMG…AILLQAEILD (168 aa)) form the tr-type G domain. Positions 355–362 (GHVDHGKT) are G1. GTP is bound at residue 355–362 (GHVDHGKT). The interval 380 to 384 (GITQH) is G2. A G3 region spans residues 401 to 404 (DTPG). Residues 401–405 (DTPGH) and 455–458 (NKID) each bind GTP. The tract at residues 455-458 (NKID) is G4. The segment at 491-493 (SAK) is G5.

It belongs to the TRAFAC class translation factor GTPase superfamily. Classic translation factor GTPase family. IF-2 subfamily.

It localises to the cytoplasm. Functionally, one of the essential components for the initiation of protein synthesis. Protects formylmethionyl-tRNA from spontaneous hydrolysis and promotes its binding to the 30S ribosomal subunits. Also involved in the hydrolysis of GTP during the formation of the 70S ribosomal complex. The protein is Translation initiation factor IF-2 of Bartonella bacilliformis (strain ATCC 35685 / KC583 / Herrer 020/F12,63).